The primary structure comprises 513 residues: Bifunctional purine biosynthesis protein PurH (513 aa).

The region spanning 1 to 147 is the MGS-like domain; sequence MIQIKRALVS…KNHKNVVVLT (147 aa).

This sequence belongs to the PurH family.

It carries out the reaction (6R)-10-formyltetrahydrofolate + 5-amino-1-(5-phospho-beta-D-ribosyl)imidazole-4-carboxamide = 5-formamido-1-(5-phospho-D-ribosyl)imidazole-4-carboxamide + (6S)-5,6,7,8-tetrahydrofolate. The catalysed reaction is IMP + H2O = 5-formamido-1-(5-phospho-D-ribosyl)imidazole-4-carboxamide. Its pathway is purine metabolism; IMP biosynthesis via de novo pathway; 5-formamido-1-(5-phospho-D-ribosyl)imidazole-4-carboxamide from 5-amino-1-(5-phospho-D-ribosyl)imidazole-4-carboxamide (10-formyl THF route): step 1/1. The protein operates within purine metabolism; IMP biosynthesis via de novo pathway; IMP from 5-formamido-1-(5-phospho-D-ribosyl)imidazole-4-carboxamide: step 1/1. This chain is Bifunctional purine biosynthesis protein PurH, found in Leptospira biflexa serovar Patoc (strain Patoc 1 / Ames).